Reading from the N-terminus, the 210-residue chain is Probable nicotinate-nucleotide adenylyltransferase (210 aa).

It belongs to the NadD family.

The enzyme catalyses nicotinate beta-D-ribonucleotide + ATP + H(+) = deamido-NAD(+) + diphosphate. It functions in the pathway cofactor biosynthesis; NAD(+) biosynthesis; deamido-NAD(+) from nicotinate D-ribonucleotide: step 1/1. Its function is as follows. Catalyzes the reversible adenylation of nicotinate mononucleotide (NaMN) to nicotinic acid adenine dinucleotide (NaAD). The protein is Probable nicotinate-nucleotide adenylyltransferase of Streptococcus pyogenes serotype M18 (strain MGAS8232).